We begin with the raw amino-acid sequence, 147 residues long: Hemoglobin subunit beta (147 aa).

Val2 is modified (N-acetylvaline). Residues 3-147 (HLTGDEKAAV…VANALAHKYH (145 aa)) enclose the Globin domain. Residue Thr13 is modified to Phosphothreonine. At Ser45 the chain carries Phosphoserine. Lys60 is subject to N6-acetyllysine. A heme b-binding site is contributed by His64. Lys83 is subject to N6-acetyllysine. His93 provides a ligand contact to heme b. Cys94 is subject to S-nitrosocysteine. Lys145 carries the N6-acetyllysine modification.

This sequence belongs to the globin family. In terms of assembly, heterotetramer of two alpha chains and two beta chains. As to expression, red blood cells.

Functionally, involved in oxygen transport from the lung to the various peripheral tissues. The sequence is that of Hemoglobin subunit beta (HBB) from Saimiri sciureus (Common squirrel monkey).